The following is a 384-amino-acid chain: S-adenosylmethionine synthase (384 aa).

His15 is a binding site for ATP. Asp17 contributes to the Mg(2+) binding site. Position 43 (Glu43) interacts with K(+). The L-methionine site is built by Glu56 and Gln99. The flexible loop stretch occupies residues 99 to 109 (QSPDINQGVDK). ATP contacts are provided by residues 164–166 (DAK), 230–231 (RF), Asp239, 245–246 (RK), Ala262, and Lys266. Asp239 contributes to the L-methionine binding site. Position 270 (Lys270) interacts with L-methionine.

This sequence belongs to the AdoMet synthase family. In terms of assembly, homotetramer; dimer of dimers. The cofactor is Mg(2+). K(+) is required as a cofactor.

The protein localises to the cytoplasm. The catalysed reaction is L-methionine + ATP + H2O = S-adenosyl-L-methionine + phosphate + diphosphate. Its pathway is amino-acid biosynthesis; S-adenosyl-L-methionine biosynthesis; S-adenosyl-L-methionine from L-methionine: step 1/1. In terms of biological role, catalyzes the formation of S-adenosylmethionine (AdoMet) from methionine and ATP. The overall synthetic reaction is composed of two sequential steps, AdoMet formation and the subsequent tripolyphosphate hydrolysis which occurs prior to release of AdoMet from the enzyme. The polypeptide is S-adenosylmethionine synthase (Vibrio parahaemolyticus serotype O3:K6 (strain RIMD 2210633)).